Here is a 587-residue protein sequence, read N- to C-terminus: Dynein axonemal intermediate chain 2 (587 aa).

4 WD repeats span residues R214 to E254, S261 to E302, G362 to M401, and Y405 to S445. 2 disordered regions span residues L519 to E542 and K562 to E587.

Belongs to the dynein intermediate chain family. In terms of assembly, consists of at least two heavy chains and a number of intermediate and light chains. Interacts with DNAAF2. Interacts with DNAAF6/PIH1D3. Interacts with HEATR2; probably involved in outer arm dynein assembly. Interacts with C16ORF71/DAAP1.

The protein resides in the cytoplasm. It is found in the cytoskeleton. Its subcellular location is the cilium axoneme. The protein localises to the dynein axonemal particle. Its function is as follows. Part of the dynein complex of multiciliated cell cilia. This chain is Dynein axonemal intermediate chain 2 (dnai2), found in Xenopus laevis (African clawed frog).